Consider the following 359-residue polypeptide: Leafy/floricaula homolog FL1 (359 aa).

The segment at 113–170 (SEEQVVQHSEKDQLGRAGSGDTAGTSWGAQQQRKKHRHRHHITAMKGAATEEDEEDEE) is disordered. Over residues 144 to 155 (QRKKHRHRHHIT) the composition is skewed to basic residues. 3 consecutive DNA-binding regions follow at residues 179–183 (REHPF), 248–255 (NKPKMRHY), and 320–323 (YVPT). Residues 340 to 352 (ASSASTSTSAPTA) are compositionally biased toward low complexity. The interval 340–359 (ASSASTSTSAPTAHHLELPY) is disordered.

The protein belongs to the FLO/LFY family. As to expression, expressed strongly in the early floral primordium and then successively in the primordia of sepals, petals, stamens and carpels. Also in the leaf primordia and young leaves.

The protein resides in the nucleus. Probable transcription factor. This Eucalyptus globulus (Tasmanian blue gum) protein is Leafy/floricaula homolog FL1 (LF1).